The sequence spans 159 residues: Ribosomal RNA large subunit methyltransferase H (159 aa).

S-adenosyl-L-methionine is bound by residues Leu76, Gly108, and 127–132 (FSKMTF).

Belongs to the RNA methyltransferase RlmH family. As to quaternary structure, homodimer.

It localises to the cytoplasm. The catalysed reaction is pseudouridine(1915) in 23S rRNA + S-adenosyl-L-methionine = N(3)-methylpseudouridine(1915) in 23S rRNA + S-adenosyl-L-homocysteine + H(+). Its function is as follows. Specifically methylates the pseudouridine at position 1915 (m3Psi1915) in 23S rRNA. The protein is Ribosomal RNA large subunit methyltransferase H of Clostridium botulinum (strain Kyoto / Type A2).